The following is a 123-amino-acid chain: Large ribosomal subunit protein bL12 (123 aa).

The protein belongs to the bacterial ribosomal protein bL12 family. In terms of assembly, homodimer. Part of the ribosomal stalk of the 50S ribosomal subunit. Forms a multimeric L10(L12)X complex, where L10 forms an elongated spine to which 2 to 4 L12 dimers bind in a sequential fashion. Binds GTP-bound translation factors.

In terms of biological role, forms part of the ribosomal stalk which helps the ribosome interact with GTP-bound translation factors. Is thus essential for accurate translation. In Rhodopseudomonas palustris (strain BisB18), this protein is Large ribosomal subunit protein bL12.